A 200-amino-acid chain; its full sequence is Cytochrome c biogenesis ATP-binding export protein CcmA (200 aa).

Residues 1 to 200 (MRLSGRGLRC…TREMRIGAAA (200 aa)) enclose the ABC transporter domain. 35-42 (GRNGAGKT) contributes to the ATP binding site.

This sequence belongs to the ABC transporter superfamily. CcmA exporter (TC 3.A.1.107) family. The complex is composed of two ATP-binding proteins (CcmA) and two transmembrane proteins (CcmB).

It is found in the cell inner membrane. The enzyme catalyses heme b(in) + ATP + H2O = heme b(out) + ADP + phosphate + H(+). Functionally, part of the ABC transporter complex CcmAB involved in the biogenesis of c-type cytochromes; once thought to export heme, this seems not to be the case, but its exact role is uncertain. Responsible for energy coupling to the transport system. The chain is Cytochrome c biogenesis ATP-binding export protein CcmA from Rhodopseudomonas palustris (strain HaA2).